The primary structure comprises 921 residues: Protein translocase subunit SecA (921 aa).

Residues Q85, 103-107, and D514 contribute to the ATP site; that span reads GEGKT. 4 residues coordinate Zn(2+): C905, C907, C916, and H917.

This sequence belongs to the SecA family. Monomer and homodimer. Part of the essential Sec protein translocation apparatus which comprises SecA, SecYEG and auxiliary proteins SecDF-YajC and YidC. It depends on Zn(2+) as a cofactor.

The protein localises to the cell inner membrane. It localises to the cytoplasm. The enzyme catalyses ATP + H2O + cellular proteinSide 1 = ADP + phosphate + cellular proteinSide 2.. In terms of biological role, part of the Sec protein translocase complex. Interacts with the SecYEG preprotein conducting channel. Has a central role in coupling the hydrolysis of ATP to the transfer of proteins into and across the cell membrane, serving both as a receptor for the preprotein-SecB complex and as an ATP-driven molecular motor driving the stepwise translocation of polypeptide chains across the membrane. The sequence is that of Protein translocase subunit SecA from Herminiimonas arsenicoxydans.